We begin with the raw amino-acid sequence, 161 residues long: Nucleotide-binding protein Csal_2524 (161 aa).

This sequence belongs to the YajQ family.

Nucleotide-binding protein. This Chromohalobacter salexigens (strain ATCC BAA-138 / DSM 3043 / CIP 106854 / NCIMB 13768 / 1H11) protein is Nucleotide-binding protein Csal_2524.